The sequence spans 225 residues: Ribonuclease T (225 aa).

Residues 1 to 21 (MSEDHFDDEHEGHGGGGGSRH) are disordered. In terms of domain architecture, Exonuclease spans 33–207 (VVVDVETGGF…YDTEKTAELF (175 aa)). Mg(2+) contacts are provided by Asp36, Glu38, His194, and Asp199. His194 (proton donor/acceptor) is an active-site residue.

The protein belongs to the RNase T family. Homodimer. Mg(2+) is required as a cofactor.

Functionally, trims short 3' overhangs of a variety of RNA species, leaving a one or two nucleotide 3' overhang. Responsible for the end-turnover of tRNA: specifically removes the terminal AMP residue from uncharged tRNA (tRNA-C-C-A). Also appears to be involved in tRNA biosynthesis. The protein is Ribonuclease T of Pseudomonas syringae pv. syringae (strain B728a).